The chain runs to 243 residues: Pyridoxine 5'-phosphate synthase (243 aa).

Asn-9 serves as a coordination point for 3-amino-2-oxopropyl phosphate. 11–12 (DH) contacts 1-deoxy-D-xylulose 5-phosphate. Arg-20 serves as a coordination point for 3-amino-2-oxopropyl phosphate. His-45 functions as the Proton acceptor in the catalytic mechanism. Residues Arg-47 and His-52 each coordinate 1-deoxy-D-xylulose 5-phosphate. The Proton acceptor role is filled by Glu-72. Residue Thr-102 participates in 1-deoxy-D-xylulose 5-phosphate binding. His-193 (proton donor) is an active-site residue. 3-amino-2-oxopropyl phosphate contacts are provided by residues Gly-194 and 215-216 (GH).

Belongs to the PNP synthase family. Homooctamer; tetramer of dimers.

Its subcellular location is the cytoplasm. It carries out the reaction 3-amino-2-oxopropyl phosphate + 1-deoxy-D-xylulose 5-phosphate = pyridoxine 5'-phosphate + phosphate + 2 H2O + H(+). The protein operates within cofactor biosynthesis; pyridoxine 5'-phosphate biosynthesis; pyridoxine 5'-phosphate from D-erythrose 4-phosphate: step 5/5. In terms of biological role, catalyzes the complicated ring closure reaction between the two acyclic compounds 1-deoxy-D-xylulose-5-phosphate (DXP) and 3-amino-2-oxopropyl phosphate (1-amino-acetone-3-phosphate or AAP) to form pyridoxine 5'-phosphate (PNP) and inorganic phosphate. In Shigella dysenteriae serotype 1 (strain Sd197), this protein is Pyridoxine 5'-phosphate synthase.